The sequence spans 468 residues: MEEHYYVSIDIGSSSVKTIVGEKFHNGINVIGTGQTYTSGIKNGLIDDFDIARQAIKDTIKKASIASGVDIKEVFLKLPIIGTEVYDESNEIDFYEDTEINGSHIEKVLEGIREKNDVQETEVINVFPIRFIVDKENEVSDPKELIARHSLKVEAGVIAIQKSILINMIKCVEACGVDVLDVYSDAYNYGSILTATEKELGACVIDIGEDVTQVAFYERGELVDADSIEMAGRDITDDIAQGLNTSYETAEKVKHQYGHAFYDSASDQDIFTVEQVDSDETVQYTQKDLSDFIEARVEEIFFEVFDVLQDLGLTKVNGGFIVTGGSANLLGVKELLSDMVSEKVRIHTPSQMGIRKPEFSSAISTISSSIAFDELLDYVTINYHDNEETEEDVIDVKDKDNESKLGGFDWFKRKTNKKDTHENEVESSDEEIYQSEDNHQEHKQNHEHVQDKDKEESKFKKLMKSLFE.

Positions asparagine 416–glutamate 468 are disordered. A compositionally biased stretch (acidic residues) spans valine 425 to glutamine 434. Positions glutamate 436–phenylalanine 459 are enriched in basic and acidic residues.

This sequence belongs to the FtsA/MreB family. As to quaternary structure, self-interacts. Interacts with FtsZ.

The protein localises to the cell membrane. Functionally, cell division protein that is involved in the assembly of the Z ring. May serve as a membrane anchor for the Z ring. This is Cell division protein FtsA from Staphylococcus aureus (strain MRSA252).